A 228-amino-acid polypeptide reads, in one-letter code: UPF0173 metal-dependent hydrolase Dred_1740 (228 aa).

Belongs to the UPF0173 family.

The protein is UPF0173 metal-dependent hydrolase Dred_1740 of Desulforamulus reducens (strain ATCC BAA-1160 / DSM 100696 / MI-1) (Desulfotomaculum reducens).